We begin with the raw amino-acid sequence, 255 residues long: Endonuclease V (255 aa).

Residues D42 and D110 each contribute to the Mg(2+) site.

This sequence belongs to the endonuclease V family. It depends on Mg(2+) as a cofactor.

Its subcellular location is the cytoplasm. The enzyme catalyses Endonucleolytic cleavage at apurinic or apyrimidinic sites to products with a 5'-phosphate.. Functionally, DNA repair enzyme involved in the repair of deaminated bases. Selectively cleaves double-stranded DNA at the second phosphodiester bond 3' to a deoxyinosine leaving behind the intact lesion on the nicked DNA. The sequence is that of Endonuclease V from Aeropyrum pernix (strain ATCC 700893 / DSM 11879 / JCM 9820 / NBRC 100138 / K1).